The primary structure comprises 313 residues: Calcyphosin-2 (313 aa).

3 EF-hand domains span residues 144–179, 180–215, and 216–251; these read RILT…FHLE, VSEK…EMNE, and YRKS…KKHS. Residues D193, N195, N197, K199, and E204 each contribute to the Ca(2+) site.

The protein is Calcyphosin-2 (CAPS2) of Macaca fascicularis (Crab-eating macaque).